Consider the following 765-residue polypeptide: E3 ubiquitin-protein ligase SlrP (765 aa).

The interaction with target proteins stretch occupies residues 1-453; it reads MFNITNIQST…YQGPRVLFAM (453 aa). 10 LRR repeats span residues 200 to 219, 221 to 242, 243 to 262, 263 to 284, 285 to 305, 306 to 325, 326 to 346, 347 to 368, 369 to 389, and 390 to 410; these read QITT…ENLQ, NIKT…LPDT, IQEM…RLPS, ALQS…LPEE, LRYL…LPSE, ITHL…TLPP, GLKT…SLPP, ELQV…LPPT, ITTL…LPAA, and LQIM…LPHF. The linker stretch occupies residues 454-461; that stretch reads GDFSIVRV. Positions 462 to 765 are E3 ubiquitin-protein ligase catalytic domain; that stretch reads TRPLHQAVQG…VSSLMSAYWR (304 aa). The NEL domain maps to 464-758; it reads PLHQAVQGWL…NILLKKEVSS (295 aa). Residue Cys-546 is the Glycyl thioester intermediate of the active site.

Belongs to the LRR-containing bacterial E3 ligase family. Interacts with host TXN. In terms of processing, ubiquitinated in the presence of host E1 ubiquitin-activating enzyme, E2 ubiquitin-conjugating enzyme and ubiquitin.

The protein resides in the secreted. It is found in the host cytoplasm. It catalyses the reaction S-ubiquitinyl-[E2 ubiquitin-conjugating enzyme]-L-cysteine + [acceptor protein]-L-lysine = [E2 ubiquitin-conjugating enzyme]-L-cysteine + N(6)-ubiquitinyl-[acceptor protein]-L-lysine.. Effector proteins function to alter host cell physiology and promote bacterial survival in host tissues. This protein is an E3 ubiquitin ligase that interferes with host's ubiquitination pathway. Can ubiquitinate both ubiquitin and host TXN (thioredoxin). Leads to significant decrease of thioredoxin activity and increase of host cell death. In Salmonella typhimurium (strain 14028s / SGSC 2262), this protein is E3 ubiquitin-protein ligase SlrP (slrP).